The sequence spans 477 residues: Bifunctional protein HldE (477 aa).

The segment at 1–321 is ribokinase; the sequence is MKILKSFTPR…EYEASLHKST (321 aa). An ATP-binding site is contributed by 198-201; the sequence is NKKE. Residue Asp266 is part of the active site. Residues 348–477 form a cytidylyltransferase region; the sequence is FTNGCFDILH…IQKIKGDLHV (130 aa).

This sequence in the N-terminal section; belongs to the carbohydrate kinase PfkB family. It in the C-terminal section; belongs to the cytidylyltransferase family. Homodimer.

The catalysed reaction is D-glycero-beta-D-manno-heptose 7-phosphate + ATP = D-glycero-beta-D-manno-heptose 1,7-bisphosphate + ADP + H(+). The enzyme catalyses D-glycero-beta-D-manno-heptose 1-phosphate + ATP + H(+) = ADP-D-glycero-beta-D-manno-heptose + diphosphate. The protein operates within nucleotide-sugar biosynthesis; ADP-L-glycero-beta-D-manno-heptose biosynthesis; ADP-L-glycero-beta-D-manno-heptose from D-glycero-beta-D-manno-heptose 7-phosphate: step 1/4. It functions in the pathway nucleotide-sugar biosynthesis; ADP-L-glycero-beta-D-manno-heptose biosynthesis; ADP-L-glycero-beta-D-manno-heptose from D-glycero-beta-D-manno-heptose 7-phosphate: step 3/4. In terms of biological role, catalyzes the phosphorylation of D-glycero-D-manno-heptose 7-phosphate at the C-1 position to selectively form D-glycero-beta-D-manno-heptose-1,7-bisphosphate. Its function is as follows. Catalyzes the ADP transfer from ATP to D-glycero-beta-D-manno-heptose 1-phosphate, yielding ADP-D-glycero-beta-D-manno-heptose. The sequence is that of Bifunctional protein HldE from Sulfurimonas denitrificans (strain ATCC 33889 / DSM 1251) (Thiomicrospira denitrificans (strain ATCC 33889 / DSM 1251)).